A 75-amino-acid polypeptide reads, in one-letter code: Tautomerase PptA (75 aa).

Proline 2 functions as the Proton acceptor; via imino nitrogen in the catalytic mechanism.

This sequence belongs to the 4-oxalocrotonate tautomerase family. PptA subfamily. As to quaternary structure, homodimer.

It is found in the cytoplasm. In Klebsiella pneumoniae (strain 342), this protein is Tautomerase PptA.